The chain runs to 39 residues: Fuctinin-3 (39 aa).

The disordered stretch occupies residues 1–39 (KELNSNHDGADETSEKEQQEAIEHIDEVQNEIDRLNETA).

This sequence to human SET/PHAPII protein. Oligomer.

It is found in the cytoplasm. In terms of biological role, has a role in the physiological regulation of fucosylation processes. The polypeptide is Fuctinin-3 (Rattus norvegicus (Rat)).